Reading from the N-terminus, the 2283-residue chain is AT-rich interactive domain-containing protein 1A (2283 aa).

The segment covering 1–10 (MAAQVAPAAA) has biased composition (low complexity). Disordered regions lie at residues 1 to 333 (MAAQ…PADM), 346 to 822 (AAAA…LPNA), and 979 to 1006 (ATKM…TTTN). Alanine 2 is subject to N-acetylalanine. Positions 22 to 34 (ELKKAEQQQREEA) are enriched in basic and acidic residues. Phosphoserine is present on residues serine 56 and serine 77. A compositionally biased stretch (gly residues) spans 77 to 93 (SNGGGGGGGAGSGGGPG). 2 stretches are compositionally biased toward low complexity: residues 128–143 (SSSD…AAAA) and 233–266 (SSPR…SSSS). A Phosphoserine modification is found at serine 234. Residues 274–287 (AMGGGGPSAAGGGT) show a composition bias toward gly residues. Threonine 287 is modified (phosphothreonine). The short motif at 296-300 (LNQLL) is the LXXLL element. The span at 296–307 (LNQLLTSPSSAR) shows a compositional bias: polar residues. A Phosphoserine modification is found at serine 302. Over residues 311–328 (GYPGGDYGGGPQDGGAGK) the composition is skewed to gly residues. Residues serine 365 and serine 384 each carry the phosphoserine modification. The span at 402–427 (PYSQQQGPPSGPQQGHGYPGQPYGSQ) shows a compositional bias: low complexity. An Asymmetric dimethylarginine modification is found at arginine 431. Polar residues-rich tracts occupy residues 438–451 (GRAQ…SYAQ) and 459–470 (QGPSAYGQQGQT). 2 stretches are compositionally biased toward low complexity: residues 471-547 (PYYN…QHPQ) and 554-596 (QPQA…YSQQ). The residue at position 605 (serine 605) is a Phosphoserine. Residues 611 to 622 (SQASSAPSMTSS) are compositionally biased toward low complexity. Residues 629 to 638 (MNLSLQSRPS) show a composition bias toward polar residues. The segment covering 659-675 (SPGVSTSGISSSQGEQS) has biased composition (low complexity). Residues 676 to 686 (NPAQSPFSPHT) show a composition bias toward polar residues. Phosphoserine is present on residues serine 697, serine 699, serine 703, serine 731, serine 765, and serine 773. 2 stretches are compositionally biased toward polar residues: residues 731–748 (SGQS…SSIA) and 756–794 (RNPQ…QNSM). Residues 795–822 (GSYGPQGSQYGPQGGYPRQPNYNALPNA) are compositionally biased toward low complexity. Residues 1018–1109 (EPERKMWVDR…CLYAFECKIE (92 aa)) form the ARID domain. Disordered regions lie at residues 1114 to 1484 (PPPD…MMGG) and 1539 to 1636 (RANH…PPMI). A compositionally biased stretch (low complexity) spans 1142–1155 (MQGPQTPQSTSSSM). Residues 1163–1178 (PPTPASTPHSQIPPLP) are compositionally biased toward pro residues. Serine 1185 bears the Phosphoserine mark. The span at 1198–1220 (PTFQKRNSMTPNPGYQPSMNTSD) shows a compositional bias: polar residues. Serine 1236 bears the Phosphoserine mark. Arginine 1277 bears the Omega-N-methylarginine mark. A compositionally biased stretch (low complexity) spans 1343 to 1368 (QFSTQGTPSSSPFPSQQTTMYQQQQQ). A Nuclear localization signal motif is present at residues 1369-1388 (NYKRPMDGTYGPPAKRHEGE). A compositionally biased stretch (low complexity) spans 1395–1426 (SAGQGQPQQQQLPAAQSQPASQPQAAQPSPQQ). 2 stretches are compositionally biased toward polar residues: residues 1427–1436 (DVYNQYSNAY) and 1469–1478 (PGSSAQQNMP). Residues 1555–1579 (PYGPSAPVPPMTRPPPSNYQPPPSM) are compositionally biased toward pro residues. Serine 1605 is subject to Phosphoserine. Position 1613 is an N6-acetyllysine (lysine 1613). The LXXLL motif lies at 1710–1714 (LPGLL). Disordered regions lie at residues 1757-1782 (PAHT…GVGN), 1872-1904 (CPTP…PEKR), and 1917-1941 (SSTL…PFGI). The segment covering 1761-1782 (EEEEEEHLDPKLEEEEEEGVGN) has biased composition (acidic residues). Threonine 1874 and threonine 1886 each carry phosphothreonine. Low complexity predominate over residues 1882–1893 (TVEGTPGTTEQE). Lysine 1903 carries the post-translational modification N6-acetyllysine. Over residues 1923–1935 (EGAKSAEATKESS) the composition is skewed to basic and acidic residues. Phosphoserine occurs at positions 1927 and 1942. 2 consecutive short sequence motifs (LXXLL) follow at residues 1965 to 1969 (LCTLL) and 2083 to 2087 (LDGLL).

As to quaternary structure, component of SWI/SNF chromatin remodeling complexes, in some of which it can be mutually exclusive with ARID1B/BAF250B. The canonical complex contains a catalytic subunit (either SMARCA4/BRG1/BAF190A or SMARCA2/BRM/BAF190B) and at least SMARCE1, ACTL6A/BAF53, SMARCC1/BAF155, SMARCC2/BAF170, and SMARCB1/SNF5/BAF47. Other subunits specific to each of the complexes may also be present permitting several possible combinations developmentally and tissue specific. Component of the BAF (SWI/SNF-A) complex, which includes at least actin (ACTB), ARID1A/BAF250A, ARID1B/BAF250B, SMARCA2/BRM, SMARCA4/BRG1/BAF190A, ACTL6A/BAF53, ACTL6B/BAF53B, SMARCE1/BAF57, SMARCC1/BAF155, SMARCC2/BAF170, SMARCB1/SNF5/INI1, and one or more SMARCD1/BAF60A, SMARCD2/BAF60B, or SMARCD3/BAF60C. In muscle cells, the BAF complex also contains DPF3. Component of neural progenitors-specific chromatin remodeling complex (npBAF complex) composed of at least, ARID1A/BAF250A or ARID1B/BAF250B, SMARCD1/BAF60A, SMARCD3/BAF60C, SMARCA2/BRM/BAF190B, SMARCA4/BRG1/BAF190A, SMARCB1/BAF47, SMARCC1/BAF155, SMARCE1/BAF57, SMARCC2/BAF170, PHF10/BAF45A, ACTL6A/BAF53A and actin. Component of neuron-specific chromatin remodeling complex (nBAF complex) composed of at least, ARID1A/BAF250A or ARID1B/BAF250B, SMARCD1/BAF60A, SMARCD3/BAF60C, SMARCA2/BRM/BAF190B, SMARCA4/BRG1/BAF190A, SMARCB1/BAF47, SMARCC1/BAF155, SMARCE1/BAF57, SMARCC2/BAF170, DPF1/BAF45B, DPF3/BAF45C, ACTL6B/BAF53B and actin. Component of a SWI/SNF-like EBAFa complex, at least composed of SMARCA4/BRG1/BAF190A, SMARCB1/BAF47/SNF5, ACTL6A/BAF53A, SMARCE1/BAF57, SMARCD1/BAF60A, SMARCC1/BAF155, SMARCC2/BAF170, BAF250A and MLLT1/ENL. Interacts through its C-terminus with SMARCA2/BRM/BAF190B and SMARCA4/BRG1/BAF190A. Interacts with SMARCC1/BAF155. Interacts with FOS (via bZIP domain and leucine-zipper region), FOSB isoform 1 and 2, FOSL1 and FOSL2. Widely expressed. Expressed at high levels in the testis.

The protein localises to the nucleus. In terms of biological role, involved in transcriptional activation and repression of select genes by chromatin remodeling (alteration of DNA-nucleosome topology). Component of SWI/SNF chromatin remodeling complexes that carry out key enzymatic activities, changing chromatin structure by altering DNA-histone contacts within a nucleosome in an ATP-dependent manner. Binds DNA non-specifically. Belongs to the neural progenitors-specific chromatin remodeling complex (npBAF complex) and the neuron-specific chromatin remodeling complex (nBAF complex). During neural development a switch from a stem/progenitor to a postmitotic chromatin remodeling mechanism occurs as neurons exit the cell cycle and become committed to their adult state. The transition from proliferating neural stem/progenitor cells to postmitotic neurons requires a switch in subunit composition of the npBAF and nBAF complexes. As neural progenitors exit mitosis and differentiate into neurons, npBAF complexes which contain ACTL6A/BAF53A and PHF10/BAF45A, are exchanged for homologous alternative ACTL6B/BAF53B and DPF1/BAF45B or DPF3/BAF45C subunits in neuron-specific complexes (nBAF). The npBAF complex is essential for the self-renewal/proliferative capacity of the multipotent neural stem cells. The nBAF complex along with CREST plays a role regulating the activity of genes essential for dendrite growth. The chain is AT-rich interactive domain-containing protein 1A (Arid1a) from Mus musculus (Mouse).